The primary structure comprises 217 residues: uncharacterized protein (217 aa).

Residues Gln98 to Cys203 form the PilZ domain.

This is an uncharacterized protein from Bacillus subtilis (strain 168).